A 251-amino-acid chain; its full sequence is MSGHSKWATIKHAKGAADAKRGQLFTKLSREIIFAAKQGGPSPEGNARLRLAIQKAKDSRMPSDNIERAIKKGSGELEGTTVIEMILEGYGPGGVAVLVNGMSDNRNRTVSDVRHMFSKGGGSLAESGAVSWIFEAKGVIGVETARLDTDELSLKAIDMGAEDVNTDEGYMEIYTAMPDMEKIRQQLETQGVTIDSAEINMVPKNTVKLDEETAMQVLKLLDKLEELDDVQTVSSNADFDPEVVEKYHSQA.

Belongs to the TACO1 family.

It localises to the cytoplasm. This Dehalococcoides mccartyi (strain ATCC BAA-2100 / JCM 16839 / KCTC 5957 / BAV1) protein is Probable transcriptional regulatory protein DehaBAV1_0421.